The primary structure comprises 322 residues: Heat-inducible transcription repressor HrcA (322 aa).

This sequence belongs to the HrcA family.

Negative regulator of class I heat shock genes (grpE-dnaK-dnaJ and groELS operons). Prevents heat-shock induction of these operons. The chain is Heat-inducible transcription repressor HrcA from Staphylococcus carnosus (strain TM300).